The sequence spans 105 residues: PTS system lactose-specific EIIA component (105 aa).

Residues 4–102 enclose the PTS EIIA type-3 domain; sequence EEMTLLGFEI…IHHLIELYKR (99 aa). His-78 functions as the Tele-phosphohistidine intermediate in the catalytic mechanism. At His-78 the chain carries Phosphohistidine; by HPr. Asp-81 contributes to the Mg(2+) binding site.

In terms of assembly, homotrimer. It depends on Mg(2+) as a cofactor.

The protein resides in the cytoplasm. Functionally, the phosphoenolpyruvate-dependent sugar phosphotransferase system (sugar PTS), a major carbohydrate active transport system, catalyzes the phosphorylation of incoming sugar substrates concomitantly with their translocation across the cell membrane. The enzyme II LacEF PTS system is involved in lactose transport. This chain is PTS system lactose-specific EIIA component, found in Lactococcus lactis subsp. lactis (Streptococcus lactis).